The chain runs to 593 residues: 2-succinyl-5-enolpyruvyl-6-hydroxy-3-cyclohexene-1-carboxylate synthase (593 aa).

Belongs to the TPP enzyme family. MenD subfamily. Homodimer. Mg(2+) serves as cofactor. Requires Mn(2+) as cofactor. The cofactor is thiamine diphosphate.

It catalyses the reaction isochorismate + 2-oxoglutarate + H(+) = 5-enolpyruvoyl-6-hydroxy-2-succinyl-cyclohex-3-ene-1-carboxylate + CO2. Its pathway is quinol/quinone metabolism; 1,4-dihydroxy-2-naphthoate biosynthesis; 1,4-dihydroxy-2-naphthoate from chorismate: step 2/7. The protein operates within quinol/quinone metabolism; menaquinone biosynthesis. In terms of biological role, catalyzes the thiamine diphosphate-dependent decarboxylation of 2-oxoglutarate and the subsequent addition of the resulting succinic semialdehyde-thiamine pyrophosphate anion to isochorismate to yield 2-succinyl-5-enolpyruvyl-6-hydroxy-3-cyclohexene-1-carboxylate (SEPHCHC). In Pelodictyon phaeoclathratiforme (strain DSM 5477 / BU-1), this protein is 2-succinyl-5-enolpyruvyl-6-hydroxy-3-cyclohexene-1-carboxylate synthase.